Here is a 282-residue protein sequence, read N- to C-terminus: Formamidopyrimidine-DNA glycosylase (282 aa).

Residue Pro-2 is the Schiff-base intermediate with DNA of the active site. Glu-3 functions as the Proton donor in the catalytic mechanism. The Proton donor; for beta-elimination activity role is filled by Lys-58. His-96, Arg-115, and Lys-152 together coordinate DNA. An FPG-type zinc finger spans residues 238–272 (HVYGRGGQPCERCGEEILKTVLGGRGTHYCPSCQN). Residue Arg-262 is the Proton donor; for delta-elimination activity of the active site.

It belongs to the FPG family. In terms of assembly, monomer. Requires Zn(2+) as cofactor.

It catalyses the reaction Hydrolysis of DNA containing ring-opened 7-methylguanine residues, releasing 2,6-diamino-4-hydroxy-5-(N-methyl)formamidopyrimidine.. The enzyme catalyses 2'-deoxyribonucleotide-(2'-deoxyribose 5'-phosphate)-2'-deoxyribonucleotide-DNA = a 3'-end 2'-deoxyribonucleotide-(2,3-dehydro-2,3-deoxyribose 5'-phosphate)-DNA + a 5'-end 5'-phospho-2'-deoxyribonucleoside-DNA + H(+). In terms of biological role, involved in base excision repair of DNA damaged by oxidation or by mutagenic agents. Acts as a DNA glycosylase that recognizes and removes damaged bases. Has a preference for oxidized purines, such as 7,8-dihydro-8-oxoguanine (8-oxoG). Has AP (apurinic/apyrimidinic) lyase activity and introduces nicks in the DNA strand. Cleaves the DNA backbone by beta-delta elimination to generate a single-strand break at the site of the removed base with both 3'- and 5'-phosphates. This Corynebacterium aurimucosum (strain ATCC 700975 / DSM 44827 / CIP 107346 / CN-1) (Corynebacterium nigricans) protein is Formamidopyrimidine-DNA glycosylase.